The primary structure comprises 520 residues: Arginine biosynthesis bifunctional protein ArgJ, chloroplastic (520 aa).

6 residues coordinate substrate: T264, K290, T301, E388, N515, and T520. T301 serves as the catalytic Nucleophile.

It belongs to the ArgJ family. In terms of assembly, heterodimer of an alpha and a beta chain.

It is found in the plastid. The protein localises to the chloroplast. The enzyme catalyses N(2)-acetyl-L-ornithine + L-glutamate = N-acetyl-L-glutamate + L-ornithine. The catalysed reaction is L-glutamate + acetyl-CoA = N-acetyl-L-glutamate + CoA + H(+). It functions in the pathway amino-acid biosynthesis; L-arginine biosynthesis; L-ornithine and N-acetyl-L-glutamate from L-glutamate and N(2)-acetyl-L-ornithine (cyclic): step 1/1. Its pathway is amino-acid biosynthesis; L-arginine biosynthesis; N(2)-acetyl-L-ornithine from L-glutamate: step 1/4. Catalyzes two activities which are involved in the cyclic version of arginine biosynthesis: the synthesis of acetylglutamate from glutamate and acetyl-CoA, and of ornithine by transacetylation between acetylornithine and glutamate. This chain is Arginine biosynthesis bifunctional protein ArgJ, chloroplastic, found in Physcomitrium patens (Spreading-leaved earth moss).